Consider the following 291-residue polypeptide: Ribosomal RNA small subunit methyltransferase I (291 aa).

It belongs to the methyltransferase superfamily. RsmI family.

The protein resides in the cytoplasm. The enzyme catalyses cytidine(1402) in 16S rRNA + S-adenosyl-L-methionine = 2'-O-methylcytidine(1402) in 16S rRNA + S-adenosyl-L-homocysteine + H(+). Functionally, catalyzes the 2'-O-methylation of the ribose of cytidine 1402 (C1402) in 16S rRNA. The sequence is that of Ribosomal RNA small subunit methyltransferase I from Neisseria meningitidis serogroup B (strain ATCC BAA-335 / MC58).